A 545-amino-acid polypeptide reads, in one-letter code: MAAKEVKFNSDARDRMLKGVNILADAVKVTLGPKGRNVVIDKSFGAPRITKDGVSVAKEIELSDKFENMGAQMVREVASRTNDEAGDGTTTATVLAQAIVREGLKAVAAGMNPMDLKRGIDVATAKVVEAIKSAARPVNDSSEVAQVGTISANGESFIGQQIAEAMQRVGNEGVITVEENKGMETEVEVVEGMQFDRGYLSPYFVTNADKMIAELEDAYILLHEKKLSSLQPMVPLLESVIQSQKPLLIVAEDVEGEALATLVVNKLRGGLKIAAVKAPGFGDRRKAMLQDIAILTGGQVISEDLGMKLENVTIDMLGRAKKVSINKDNTTIVDGAGEKAEIEARVSQIRQQIEETTSDYDREKLQERVAKLAGGVAVIRVGGMTEIEVKERKDRVDDALNATRAAVQEGIVVGGGVALVQGAKVLEGLSGANSDQDAGIAIIRRALEAPMRQIAENAGVDGAVVAGKVRESSDKAFGFNAQTEEYGDMFKFGVIDPAKVVRTALEDAASVAGLLITTEAMIAEKPEPKAPAGGMPDMGGMGGMM.

ATP contacts are provided by residues 30 to 33, Lys-51, 87 to 91, Gly-415, and Asp-496; these read TLGP and DGTTT. A disordered region spans residues 526 to 545; it reads PEPKAPAGGMPDMGGMGGMM. Residues 536 to 545 show a composition bias toward gly residues; it reads PDMGGMGGMM.

The protein belongs to the chaperonin (HSP60) family. Forms a cylinder of 14 subunits composed of two heptameric rings stacked back-to-back. Interacts with the co-chaperonin GroES.

It localises to the cytoplasm. The catalysed reaction is ATP + H2O + a folded polypeptide = ADP + phosphate + an unfolded polypeptide.. Together with its co-chaperonin GroES, plays an essential role in assisting protein folding. The GroEL-GroES system forms a nano-cage that allows encapsulation of the non-native substrate proteins and provides a physical environment optimized to promote and accelerate protein folding. This chain is Chaperonin GroEL, found in Paracoccus denitrificans (strain Pd 1222).